We begin with the raw amino-acid sequence, 71 residues long: Large ribosomal subunit protein bL31 (71 aa).

Positions 16, 18, 38, and 41 each coordinate Zn(2+).

It belongs to the bacterial ribosomal protein bL31 family. Type A subfamily. In terms of assembly, part of the 50S ribosomal subunit. It depends on Zn(2+) as a cofactor.

Binds the 23S rRNA. This Chromobacterium violaceum (strain ATCC 12472 / DSM 30191 / JCM 1249 / CCUG 213 / NBRC 12614 / NCIMB 9131 / NCTC 9757 / MK) protein is Large ribosomal subunit protein bL31.